A 287-amino-acid polypeptide reads, in one-letter code: Nitrogenase iron protein (287 aa).

8-15 contributes to the ATP binding site; sequence GKGGIGKS. C96 serves as a coordination point for [4Fe-4S] cluster. An ADP-ribosylarginine; by dinitrogenase reductase ADP-ribosyltransferase modification is found at R99. Residue C130 participates in [4Fe-4S] cluster binding.

It belongs to the NifH/BchL/ChlL family. In terms of assembly, homodimer. [4Fe-4S] cluster is required as a cofactor. Post-translationally, the reversible ADP-ribosylation of Arg-99 inactivates the nitrogenase reductase and regulates nitrogenase activity.

The catalysed reaction is N2 + 8 reduced [2Fe-2S]-[ferredoxin] + 16 ATP + 16 H2O = H2 + 8 oxidized [2Fe-2S]-[ferredoxin] + 2 NH4(+) + 16 ADP + 16 phosphate + 6 H(+). In terms of biological role, the key enzymatic reactions in nitrogen fixation are catalyzed by the nitrogenase complex, which has 2 components: the iron protein and the molybdenum-iron protein. In Frankia casuarinae (strain DSM 45818 / CECT 9043 / HFP020203 / CcI3), this protein is Nitrogenase iron protein.